Consider the following 188-residue polypeptide: MATHSTNEFRGGLKVMVDGDPCSIIDNEFVKPGKGQAFNRVKFRNLKTGRVLERTFKSGETLPAADVVEVEMQYSYNDGEFWHFMTSENYEQHAASKEAVAEAKQWLKEEALCMVTMWNGVPLSVEPPNFVELKITETEPGVRGDTATGGTKRAKLETGAVVRVPLFLNEGEIIKVDTRRGEYVSRAK.

Lys34 carries the N6-(3,6-diaminohexanoyl)-5-hydroxylysine modification.

Belongs to the elongation factor P family. In terms of processing, may be beta-lysylated on the epsilon-amino group of Lys-34 by the combined action of EpmA and EpmB, and then hydroxylated on the C5 position of the same residue by EpmC (if this protein is present). Lysylation is critical for the stimulatory effect of EF-P on peptide-bond formation. The lysylation moiety may extend toward the peptidyltransferase center and stabilize the terminal 3-CCA end of the tRNA. Hydroxylation of the C5 position on Lys-34 may allow additional potential stabilizing hydrogen-bond interactions with the P-tRNA.

The protein localises to the cytoplasm. Its pathway is protein biosynthesis; polypeptide chain elongation. Its function is as follows. Involved in peptide bond synthesis. Alleviates ribosome stalling that occurs when 3 or more consecutive Pro residues or the sequence PPG is present in a protein, possibly by augmenting the peptidyl transferase activity of the ribosome. Modification of Lys-34 is required for alleviation. The chain is Elongation factor P from Coxiella burnetii (strain CbuK_Q154) (Coxiella burnetii (strain Q154)).